The following is a 173-amino-acid chain: Shikimate kinase 2 (173 aa).

12 to 17 contacts ATP; it reads GCGKTT. Mg(2+)-binding residues include Thr16 and Asp32. Substrate contacts are provided by Asp34, Arg58, and Gly79. The interval 112-126 is LID domain; that stretch reads EENPQDNQRPTLTGR. Arg120 is an ATP binding site. Position 139 (Arg139) interacts with substrate. Gln155 lines the ATP pocket.

Belongs to the shikimate kinase family. AroL subfamily. As to quaternary structure, monomer. Mg(2+) serves as cofactor.

Its subcellular location is the cytoplasm. The catalysed reaction is shikimate + ATP = 3-phosphoshikimate + ADP + H(+). Its pathway is metabolic intermediate biosynthesis; chorismate biosynthesis; chorismate from D-erythrose 4-phosphate and phosphoenolpyruvate: step 5/7. Catalyzes the specific phosphorylation of the 3-hydroxyl group of shikimic acid using ATP as a cosubstrate. The chain is Shikimate kinase 2 from Pectobacterium atrosepticum (strain SCRI 1043 / ATCC BAA-672) (Erwinia carotovora subsp. atroseptica).